The chain runs to 214 residues: uncharacterized protein (214 aa).

Tyrosine 129 acts as the Proton acceptor in catalysis.

This sequence belongs to the NAD(P)-dependent epimerase/dehydratase family.

This is an uncharacterized protein from Bacillus subtilis (strain 168).